A 300-amino-acid chain; its full sequence is MEPPMEPSGGEQEPGAVRLLDLPWEDVLLPHILSRVPLRQLLRLQRVSRAFRALVQLHLAGLRRFDAAQVGPQIPRAALAWLLRDAEGLQELALAPCHEWLSDEDLVPVLTRNPQLRSVALAGCGQLSRRALGALAEGCPRLQRLSLAHCDWVDGLALRGLADRCPALEELDLTACRQLKDEAIVYLAQRRGAGLRSLSLAVNANVGDAAVQELARNCPELEHLDLTGCLRVGSDGVRTLAEYCPALRSLRVRHCHHVAEPSLSRLRKRGVDIDVEPPLHQALVLLQDMAGFAPFVNLQV.

Met-1 bears the N-acetylmethionine mark. Positions 19–66 (LLDLPWEDVLLPHILSRVPLRQLLRLQRVSRAFRALVQLHLAGLRRFD) constitute an F-box domain. The interaction with SMURF1 stretch occupies residues 113–269 (NPQLRSVALA…EPSLSRLRKR (157 aa)). LRR repeat units follow at residues 141–162 (RLQRLSLAHCDWVDGLALRGLA), 167–188 (ALEELDLTACRQLKDEAIVYLA), 194–215 (GLRSLSLAVNANVGDAAVQELA), 220–241 (ELEHLDLTGCLRVGSDGVRTLA), and 246–267 (ALRSLRVRHCHHVAEPSLSRLR).

The protein belongs to the FBXL15 family. As to quaternary structure, part of the SCF (SKP1-CUL1-F-box) E3 ubiquitin-protein ligase complex SCF(FBXL15) composed of CUL1, SKP1, RBX1 and FBXL15.

It is found in the cytoplasm. Its pathway is protein modification; protein ubiquitination. In terms of biological role, substrate recognition component of a SCF (SKP1-CUL1-F-box protein) E3 ubiquitin-protein ligase complex which mediates the ubiquitination and subsequent proteasomal degradation of SMURF1, thereby acting as a positive regulator of the BMP signaling pathway. Required for dorsal/ventral pattern formation and bone mass maintenance. Also mediates ubiquitination of SMURF2 and WWP2. The sequence is that of F-box/LRR-repeat protein 15 (FBXL15) from Canis lupus familiaris (Dog).